Consider the following 526-residue polypeptide: Clostripain (526 aa).

The signal sequence occupies residues 1-27 (MLRRKVSTLLMTALITTSFLNSKPVYA). Positions 28–50 (NPVTKSKDNNLKEVQQVTSKSNK) are excised as a propeptide. The propeptide at 182 to 190 (EKSNPRLNR) is linker. The Nucleophile role is filled by Cys-231.

The protein belongs to the peptidase C11 family. In terms of assembly, heterodimer of a light chain and a heavy chain held together by strong non-covalent forces rather than by intramolecular disulfide bridges.

It carries out the reaction Preferential cleavage: Arg-|-Xaa, including Arg-|-Pro bond, but not Lys-|-Xaa.. Its function is as follows. Cysteine endopeptidase with strict specificity. The polypeptide is Clostripain (cloSI) (Hathewaya histolytica (Clostridium histolyticum)).